The sequence spans 412 residues: Protein MT3510 (412 aa).

Lysine 227 carries the post-translational modification N6-(pyridoxal phosphate)lysine.

It belongs to the DegT/DnrJ/EryC1 family.

This Mycobacterium tuberculosis (strain CDC 1551 / Oshkosh) protein is Protein MT3510.